A 329-amino-acid polypeptide reads, in one-letter code: Beta-ketoacyl-[acyl-carrier-protein] synthase III (329 aa).

Residues Cys-123 and His-256 contribute to the active site. The ACP-binding stretch occupies residues 257 to 261; sequence QANIR. The active site involves Asn-286.

This sequence belongs to the thiolase-like superfamily. FabH family. In terms of assembly, homodimer.

It is found in the cytoplasm. The enzyme catalyses malonyl-[ACP] + acetyl-CoA + H(+) = 3-oxobutanoyl-[ACP] + CO2 + CoA. It participates in lipid metabolism; fatty acid biosynthesis. Its function is as follows. Catalyzes the condensation reaction of fatty acid synthesis by the addition to an acyl acceptor of two carbons from malonyl-ACP. Catalyzes the first condensation reaction which initiates fatty acid synthesis and may therefore play a role in governing the total rate of fatty acid production. Possesses both acetoacetyl-ACP synthase and acetyl transacylase activities. Its substrate specificity determines the biosynthesis of branched-chain and/or straight-chain of fatty acids. The polypeptide is Beta-ketoacyl-[acyl-carrier-protein] synthase III (Burkholderia thailandensis (strain ATCC 700388 / DSM 13276 / CCUG 48851 / CIP 106301 / E264)).